The chain runs to 818 residues: Nibrin (818 aa).

In terms of domain architecture, FHA spans 22–70; it reads YVVGRKNCEILLTNDQSISRVHAVLTVTEQAVTLKDSSKYGTFVNGEKL. BRCT domains lie at 91 to 168 and 211 to 301; these read SKFS…SALS and GKTF…LAAI. 3 disordered regions span residues 372-716, 729-757, and 793-818; these read AVGE…DLPR, NNSS…KKNV, and EEKL…AKKR. Positions 379–405 are enriched in polar residues; it reads KTNPTQKASTTNKPLSLGQEPSSTRIV. Low complexity predominate over residues 409–419; it reads VMSSESFSVVE. The span at 444–469 shows a compositional bias: polar residues; it reads APSSGNTTLKHSPQKQTALTSFFQPS. Positions 470–475 match the Nuclear localization signal motif; the sequence is SKKRPR. Polar residues predominate over residues 515–530; the sequence is EETSLGQACGTGQNSS. The span at 549-571 shows a compositional bias: acidic residues; it reads TAADDLEMSLEELEFLMSDEMDE. The span at 586 to 602 shows a compositional bias: polar residues; that stretch reads GLTSKINSEQLSNQQEV. The segment covering 603–612 has biased composition (basic and acidic residues); it reads TESKGRKGEK. Low complexity predominate over residues 613–625; it reads NQQSSSSNIQSMQ. 2 stretches are compositionally biased toward polar residues: residues 633–644 and 653–662; these read VTNQDTQTQSKR and SSANKGPSKN. Residues 663–675 are compositionally biased toward basic and acidic residues; sequence KTPELEEVKKEEV. 2 stretches are compositionally biased toward polar residues: residues 678 to 692 and 699 to 708; these read VVNS…QTSE and MQASTSNSGP. A compositionally biased stretch (basic and acidic residues) spans 793 to 808; that stretch reads EEKLNEREETLGDDLF. Positions 804–813 match the FxF/Y motif motif; it reads GDDLFRYNPR.

This sequence belongs to the Nibrin family. As to quaternary structure, component of the MRN complex composed of two heterodimers rad50 and mre11 associated with a single nbn.

Its subcellular location is the nucleus. It localises to the chromosome. The protein localises to the PML body. The protein resides in the telomere. Its function is as follows. Component of the MRN complex, which plays a central role in double-strand break (DSB) repair, DNA recombination, maintenance of telomere integrity and meiosis. The MRN complex is involved in the repair of DNA double-strand breaks (DSBs) via homologous recombination (HR), an error-free mechanism which primarily occurs during S and G2 phases. The complex (1) mediates the end resection of damaged DNA, which generates proper single-stranded DNA, a key initial steps in HR, and is (2) required for the recruitment of other repair factors and efficient activation of ATM and ATR upon DNA damage. The MRN complex possesses single-strand endonuclease activity and double-strand-specific 3'-5' exonuclease activity, which are provided by MRE11, to initiate end resection, which is required for single-strand invasion and recombination. Within the MRN complex, nbn acts as a protein-protein adapter, which specifically recognizes and binds phosphorylated proteins, promoting their recruitment to DNA damage sites. Recruits mre11 and rad50 components of the MRN complex to DSBs in response to DNA damage. Promotes the recruitment of PI3/PI4-kinase family members atm, atr, and probably DNA-PKcs to the DNA damage sites, activating their functions. Mediates the recruitment of phosphorylated rbbp8/CtIP to DSBs, leading to cooperation between the MRN complex and rbbp8/CtIP to initiate end resection. The MRN complex and rbbp8/CtIP are also required for chromosome alignment during metaphase. This chain is Nibrin (nbn), found in Danio rerio (Zebrafish).